Consider the following 225-residue polypeptide: Glucose-induced degradation protein 8 homolog (225 aa).

The 33-residue stretch at 22 to 54 folds into the LisH domain; that stretch reads QRAEMNRLIMDYLVTEGYKEAAEKFRIESGTQP. One can recognise a CTLH domain in the interval 60–117; the sequence is SLDDRIKIREAVQKGDLEQAVSMTNKLNPDILDSNQQLYFHLQQQRLIELIREKDIEA.

This sequence belongs to the GID8 family.

It is found in the cytoplasm. It localises to the nucleus. In terms of biological role, core component of the CTLH E3 ubiquitin-protein ligase complex that mediates ubiquitination and subsequent proteasomal degradation of target proteins. Acts as a positive regulator of Wnt signaling pathway by promoting beta-catenin (CTNNB1) nuclear accumulation. The polypeptide is Glucose-induced degradation protein 8 homolog (Nematostella vectensis (Starlet sea anemone)).